The sequence spans 59 residues: Large ribosomal subunit protein uL30 (59 aa).

It belongs to the universal ribosomal protein uL30 family. Part of the 50S ribosomal subunit.

In Alteromonas mediterranea (strain DSM 17117 / CIP 110805 / LMG 28347 / Deep ecotype), this protein is Large ribosomal subunit protein uL30.